The primary structure comprises 201 residues: FMN-dependent NADH:quinone oxidoreductase (201 aa).

FMN contacts are provided by residues Ser10, 16-18, 96-99, and 140-143; these read SQS, MYNF, and SRGG.

This sequence belongs to the azoreductase type 1 family. Homodimer. FMN serves as cofactor.

It carries out the reaction 2 a quinone + NADH + H(+) = 2 a 1,4-benzosemiquinone + NAD(+). The enzyme catalyses N,N-dimethyl-1,4-phenylenediamine + anthranilate + 2 NAD(+) = 2-(4-dimethylaminophenyl)diazenylbenzoate + 2 NADH + 2 H(+). In terms of biological role, quinone reductase that provides resistance to thiol-specific stress caused by electrophilic quinones. Also exhibits azoreductase activity. Catalyzes the reductive cleavage of the azo bond in aromatic azo compounds to the corresponding amines. In Yersinia pseudotuberculosis serotype O:1b (strain IP 31758), this protein is FMN-dependent NADH:quinone oxidoreductase.